The sequence spans 364 residues: tRNA-specific 2-thiouridylase MnmA (364 aa).

ATP is bound by residues 12–19 and Met38; that span reads GISGGVDS. Residues 98-100 are interaction with target base in tRNA; it reads NPD. The active-site Nucleophile is the Cys103. An intrachain disulfide couples Cys103 to Cys199. Gly127 provides a ligand contact to ATP. Residues 149–151 form an interaction with tRNA region; the sequence is KEQ. Cys199 functions as the Cysteine persulfide intermediate in the catalytic mechanism. The segment at 311–312 is interaction with tRNA; that stretch reads RY.

The protein belongs to the MnmA/TRMU family.

The protein localises to the cytoplasm. The enzyme catalyses S-sulfanyl-L-cysteinyl-[protein] + uridine(34) in tRNA + AH2 + ATP = 2-thiouridine(34) in tRNA + L-cysteinyl-[protein] + A + AMP + diphosphate + H(+). Its function is as follows. Catalyzes the 2-thiolation of uridine at the wobble position (U34) of tRNA, leading to the formation of s(2)U34. This chain is tRNA-specific 2-thiouridylase MnmA, found in Hahella chejuensis (strain KCTC 2396).